The chain runs to 178 residues: Small ribosomal subunit protein uS5 (178 aa).

The region spanning 13–76 (LEERVVQINR…EAAKRNLIRV (64 aa)) is the S5 DRBM domain. Residues 156-178 (ASRRDMTPQELMERRTRRETEAA) are disordered.

Belongs to the universal ribosomal protein uS5 family. Part of the 30S ribosomal subunit. Contacts proteins S4 and S8.

In terms of biological role, with S4 and S12 plays an important role in translational accuracy. Located at the back of the 30S subunit body where it stabilizes the conformation of the head with respect to the body. The chain is Small ribosomal subunit protein uS5 from Chloroflexus aurantiacus (strain ATCC 29364 / DSM 637 / Y-400-fl).